Here is a 121-residue protein sequence, read N- to C-terminus: Large ribosomal subunit protein uL22c (121 aa).

It belongs to the universal ribosomal protein uL22 family. In terms of assembly, part of the 50S ribosomal subunit.

The protein resides in the plastid. It localises to the chloroplast. In terms of biological role, this protein binds specifically to 23S rRNA. Its function is as follows. The globular domain of the protein is located near the polypeptide exit tunnel on the outside of the subunit, while an extended beta-hairpin is found that lines the wall of the exit tunnel in the center of the 70S ribosome. In Welwitschia mirabilis (Tree tumbo), this protein is Large ribosomal subunit protein uL22c (rpl22).